The following is a 137-amino-acid chain: Large ribosomal subunit protein uL16 (137 aa).

Positions 1–22 are disordered; sequence MLQPKRTKFRKVQKGRNRGLAH.

It belongs to the universal ribosomal protein uL16 family. Part of the 50S ribosomal subunit.

Binds 23S rRNA and is also seen to make contacts with the A and possibly P site tRNAs. This Chromohalobacter salexigens (strain ATCC BAA-138 / DSM 3043 / CIP 106854 / NCIMB 13768 / 1H11) protein is Large ribosomal subunit protein uL16.